Reading from the N-terminus, the 78-residue chain is MSRVCQVTGKKPMVGNNRSHAKNATRRRFLPNLQNHRFWLEDEKRFVQLRVSTKGMRIIDKKGIEVVVAELRARGEKV.

The disordered stretch occupies residues 1–21; it reads MSRVCQVTGKKPMVGNNRSHA.

It belongs to the bacterial ribosomal protein bL28 family.

The protein is Large ribosomal subunit protein bL28 of Shewanella loihica (strain ATCC BAA-1088 / PV-4).